The chain runs to 247 residues: Segregation and condensation protein A (247 aa).

This sequence belongs to the ScpA family. In terms of assembly, component of a cohesin-like complex composed of ScpA, ScpB and the Smc homodimer, in which ScpA and ScpB bind to the head domain of Smc. The presence of the three proteins is required for the association of the complex with DNA.

It is found in the cytoplasm. Participates in chromosomal partition during cell division. May act via the formation of a condensin-like complex containing Smc and ScpB that pull DNA away from mid-cell into both cell halves. The chain is Segregation and condensation protein A from Bacillus cereus (strain G9842).